The sequence spans 216 residues: MOB kinase activator 3C (216 aa).

The Zn(2+) site is built by C82, C87, H164, and H169.

It belongs to the MOB1/phocein family.

Functionally, may regulate the activity of kinases. This Bos taurus (Bovine) protein is MOB kinase activator 3C (MOB3C).